The sequence spans 57 residues: Large ribosomal subunit protein bL32 (57 aa).

The span at 1–19 (MATPKRRMSRANTRSRRSQ) shows a compositional bias: basic residues. The segment at 1 to 20 (MATPKRRMSRANTRSRRSQW) is disordered.

The protein belongs to the bacterial ribosomal protein bL32 family.

The protein is Large ribosomal subunit protein bL32 of Mycobacterium marinum (strain ATCC BAA-535 / M).